Reading from the N-terminus, the 655-residue chain is MVLYTTPFPNSCLSALHCVSWALIFPCYWLVDRLAASFIPTTYEKRQRADDPCCLQLLCTALFTPIYLALLVASLPFAFLGFLFWSPLQSARRPYIYSRLEDKGLAGGAALLSEWKGTGPGKSFCFATANVCLLPDSLARVNNLFNTQARAKEIGQRIRNGAARPQIKIYIDSPTNTSISAASFSSLVSPQGGDGVARAVPGSIKRTASVEYKGDGGRHPGDEAANGPASGDPVDSSSPEDACIVRIGGEEGGRPPEADDPVPGGQARNGAGGGPRGQTPNHNQQDGDSGSLGSPSASRESLVKGRAGPDTSASGEPGANSKLLYKASVVKKAAARRRRHPDEAFDHEVSAFFPANLDFLCLQEVFDKRAATKLKEQLHGYFEYILYDVGVYGCQGCCSFKCLNSGLLFASRYPIMDVAYHCYPNKCNDDALASKGALFLKVQVGSTPQDQRIVGYIACTHLHAPQEDSAIRCGQLDLLQDWLADFRKSTSSSSAANPEELVAFDVVCGDFNFDNCSSDDKLEQQHSLFTHYRDPCRLGPGEEKPWAIGTLLDTNGLYDEDVCTPDNLQKVLESEEGRREYLAFPTSKSSGQKGRKELLKGNGRRIDYMLHAEEGLCPDWKAEVEEFSFITQLSGLTDHLPVAMRLMVSSGEEEA.

At 1–10 (MVLYTTPFPN) the chain is on the cytoplasmic side. Positions 11 to 31 (SCLSALHCVSWALIFPCYWLV) form an intramembrane region, helical. Topologically, residues 32–64 (DRLAASFIPTTYEKRQRADDPCCLQLLCTALFT) are cytoplasmic. 3 S-palmitoyl cysteine lipidation sites follow: cysteine 53, cysteine 54, and cysteine 59. Residues 65–85 (PIYLALLVASLPFAFLGFLFW) constitute an intramembrane region (helical). Residues 86–655 (SPLQSARRPY…LMVSSGEEEA (570 aa)) are Cytoplasmic-facing. Serine 178 bears the Phosphoserine mark. Positions 210 to 319 (VEYKGDGGRH…DTSASGEPGA (110 aa)) are disordered. Composition is skewed to basic and acidic residues over residues 212 to 222 (YKGDGGRHPGD) and 248 to 257 (GGEEGGRPPE). The span at 279-299 (TPNHNQQDGDSGSLGSPSASR) shows a compositional bias: polar residues. Serine 291 is modified (phosphoserine). Glutamate 364 is a binding site for Mg(2+). 2 S-palmitoyl cysteine lipidation sites follow: cysteine 397 and cysteine 398. Residue histidine 639 is the Proton acceptor of the active site.

The protein belongs to the neutral sphingomyelinase family. The cofactor is Mg(2+). Palmitoylated, palmitoylation-deficient proteins are targeted for lysosomal degradation. In terms of tissue distribution, predominantly expressed in brain.

The protein resides in the golgi apparatus membrane. It is found in the cell membrane. The enzyme catalyses a sphingomyelin + H2O = phosphocholine + an N-acylsphing-4-enine + H(+). The catalysed reaction is N-(15Z-tetracosenoyl)sphing-4-enine-1-phosphocholine + H2O = N-(15Z-tetracosenoyl)-sphing-4-enine + phosphocholine + H(+). It carries out the reaction N-(tetracosanoyl)-sphing-4-enine-1-phosphocholine + H2O = N-tetracosanoyl-sphing-4-enine + phosphocholine + H(+). It catalyses the reaction an N-(acyl)-sphingosylphosphocholine + H2O = an N-acyl-sphingoid base + phosphocholine + H(+). The enzyme catalyses 1-hexadecanoyl-sn-glycero-3-phosphocholine + H2O = 1-hexadecanoyl-sn-glycerol + phosphocholine + H(+). The catalysed reaction is 1-O-octadecyl-sn-glycero-3-phosphocholine + H2O = 1-O-octadecyl-sn-glycerol + phosphocholine + H(+). It carries out the reaction a sphingosylphosphocholine + H2O = a sphingoid base + phosphocholine + H(+). It catalyses the reaction N-(hexadecanoyl)-sphing-4-enine-1-phosphocholine + H2O = N-hexadecanoylsphing-4-enine + phosphocholine + H(+). Its pathway is lipid metabolism; sphingolipid metabolism. With respect to regulation, inhibited by nSMase inhibitor GW4869. Binding of anionic phospholipids (APLs) such as phosphatidylserine (PS) and phosphatidic acid (PA) increases enzymatic activity. In terms of biological role, catalyzes the hydrolysis of sphingomyelin to form ceramide and phosphocholine. Ceramide mediates numerous cellular functions, such as apoptosis and growth arrest, and is capable of regulating these 2 cellular events independently. Also hydrolyzes sphingosylphosphocholine. Regulates the cell cycle by acting as a growth suppressor in confluent cells. Probably acts as a regulator of postnatal development and participates in bone and dentin mineralization. Binds to anionic phospholipids (APLs) such as phosphatidylserine (PS) and phosphatidic acid (PA) that modulate enzymatic activity and subcellular location. May be involved in IL-1-beta-induced JNK activation in hepatocytes. May act as a mediator in transcriptional regulation of NOS2/iNOS via the NF-kappa-B activation under inflammatory conditions. This Homo sapiens (Human) protein is Sphingomyelin phosphodiesterase 3.